Here is a 508-residue protein sequence, read N- to C-terminus: uncharacterized protein (508 aa).

Its subcellular location is the virion. This is an uncharacterized protein from Acanthamoeba polyphaga mimivirus (APMV).